A 167-amino-acid polypeptide reads, in one-letter code: Ubiquitin-fold modifier-conjugating enzyme 1 (167 aa).

Catalysis depends on Cys-116, which acts as the Glycyl thioester intermediate.

It belongs to the ubiquitin-conjugating enzyme family. UFC1 subfamily.

Functionally, E2-like enzyme which forms an intermediate with UFM1 via a thioester linkage. The sequence is that of Ubiquitin-fold modifier-conjugating enzyme 1 from Anopheles gambiae (African malaria mosquito).